Consider the following 104-residue polypeptide: L-rhamnose mutarotase (104 aa).

Residue Tyr-18 coordinates substrate. His-22 (proton donor) is an active-site residue. Substrate contacts are provided by residues Tyr-41 and 76–77; that span reads WW.

This sequence belongs to the rhamnose mutarotase family. As to quaternary structure, homodimer.

The protein resides in the cytoplasm. The catalysed reaction is alpha-L-rhamnose = beta-L-rhamnose. It functions in the pathway carbohydrate metabolism; L-rhamnose metabolism. In terms of biological role, involved in the anomeric conversion of L-rhamnose. This chain is L-rhamnose mutarotase, found in Listeria monocytogenes serovar 1/2a (strain ATCC BAA-679 / EGD-e).